The primary structure comprises 186 residues: Pyridoxal 5'-phosphate synthase subunit PdxT (186 aa).

47 to 49 (GES) provides a ligand contact to L-glutamine. Residue C79 is the Nucleophile of the active site. Residues R106 and 134 to 135 (IR) each bind L-glutamine. Active-site charge relay system residues include H170 and E172.

The protein belongs to the glutaminase PdxT/SNO family. As to quaternary structure, in the presence of PdxS, forms a dodecamer of heterodimers. Only shows activity in the heterodimer.

The catalysed reaction is aldehydo-D-ribose 5-phosphate + D-glyceraldehyde 3-phosphate + L-glutamine = pyridoxal 5'-phosphate + L-glutamate + phosphate + 3 H2O + H(+). It catalyses the reaction L-glutamine + H2O = L-glutamate + NH4(+). It participates in cofactor biosynthesis; pyridoxal 5'-phosphate biosynthesis. Its function is as follows. Catalyzes the hydrolysis of glutamine to glutamate and ammonia as part of the biosynthesis of pyridoxal 5'-phosphate. The resulting ammonia molecule is channeled to the active site of PdxS. The chain is Pyridoxal 5'-phosphate synthase subunit PdxT from Methanothrix thermoacetophila (strain DSM 6194 / JCM 14653 / NBRC 101360 / PT) (Methanosaeta thermophila).